The chain runs to 507 residues: Methionine--tRNA ligase (507 aa).

A 'HIGH' region motif is present at residues tyrosine 12–histidine 22. The short motif at lysine 295 to serine 299 is the 'KMSKS' region element. ATP is bound at residue lysine 298.

The protein belongs to the class-I aminoacyl-tRNA synthetase family. MetG type 2B subfamily. Monomer.

The protein resides in the cytoplasm. It carries out the reaction tRNA(Met) + L-methionine + ATP = L-methionyl-tRNA(Met) + AMP + diphosphate. In terms of biological role, is required not only for elongation of protein synthesis but also for the initiation of all mRNA translation through initiator tRNA(fMet) aminoacylation. The protein is Methionine--tRNA ligase of Rickettsia typhi (strain ATCC VR-144 / Wilmington).